Consider the following 160-residue polypeptide: Protein-export protein SecB (160 aa).

The protein belongs to the SecB family. As to quaternary structure, homotetramer, a dimer of dimers. One homotetramer interacts with 1 SecA dimer.

Its subcellular location is the cytoplasm. Its function is as follows. One of the proteins required for the normal export of preproteins out of the cell cytoplasm. It is a molecular chaperone that binds to a subset of precursor proteins, maintaining them in a translocation-competent state. It also specifically binds to its receptor SecA. This chain is Protein-export protein SecB, found in Burkholderia multivorans (strain ATCC 17616 / 249).